A 351-amino-acid chain; its full sequence is Glucan endo-1,3-beta-glucosidase (351 aa).

The first 32 residues, 1–32 (MALWYLFNKRSLGAAVLILVGLLMCNIQITGA), serve as a signal peptide directing secretion. Position 33 is a pyrrolidone carboxylic acid (Q33). N79 and N99 each carry an N-linked (GlcNAc...) asparagine glycan. Residue E128 is the Proton donor of the active site. N235 is a glycosylation site (N-linked (GlcNAc...) asparagine). The Nucleophile role is filled by E268.

This sequence belongs to the glycosyl hydrolase 17 family. Glycosylated. Post-translationally, the N-terminus is blocked.

It is found in the secreted. Its subcellular location is the extracellular space. It localises to the extracellular matrix. The enzyme catalyses Hydrolysis of (1-&gt;3)-beta-D-glucosidic linkages in (1-&gt;3)-beta-D-glucans.. In terms of biological role, implicated in the defense of plants against pathogens. This chain is Glucan endo-1,3-beta-glucosidase (SP41B), found in Nicotiana tabacum (Common tobacco).